The primary structure comprises 272 residues: PHD finger protein ALFIN-LIKE 6 (272 aa).

Residues 1–23 (MEGGGGGGGGGGGGGGGGGGGGA) show a composition bias toward gly residues. Disordered regions lie at residues 1–24 (MEGGGGGGGGGGGGGGGGGGGGAP) and 162–218 (QAKE…DNTL). Over residues 168–182 (PNSSSKSNKPSSKVQ) the composition is skewed to low complexity. Positions 183–200 (SKAESRSKSKLSAPKDEE) are enriched in basic and acidic residues. Residues 201–214 (GSGDDEGEEEEDDH) are compositionally biased toward acidic residues. Residues 216–268 (NTLCGTCGTNDGKDEFWICCDNCEKWYHGKCVKITPARAEHIKQYKCPDCTNK) form a PHD-type zinc finger.

The protein belongs to the Alfin family.

Its subcellular location is the nucleus. Its function is as follows. Histone-binding component that specifically recognizes H3 tails trimethylated on 'Lys-4' (H3K4me3), which mark transcription start sites of virtually all active genes. The chain is PHD finger protein ALFIN-LIKE 6 from Oryza sativa subsp. japonica (Rice).